The following is a 283-amino-acid chain: Bifunctional protein FolD (283 aa).

NADP(+) is bound by residues glycine 165 to serine 167, serine 190, and isoleucine 231.

The protein belongs to the tetrahydrofolate dehydrogenase/cyclohydrolase family. As to quaternary structure, homodimer.

The catalysed reaction is (6R)-5,10-methylene-5,6,7,8-tetrahydrofolate + NADP(+) = (6R)-5,10-methenyltetrahydrofolate + NADPH. It carries out the reaction (6R)-5,10-methenyltetrahydrofolate + H2O = (6R)-10-formyltetrahydrofolate + H(+). The protein operates within one-carbon metabolism; tetrahydrofolate interconversion. Functionally, catalyzes the oxidation of 5,10-methylenetetrahydrofolate to 5,10-methenyltetrahydrofolate and then the hydrolysis of 5,10-methenyltetrahydrofolate to 10-formyltetrahydrofolate. The chain is Bifunctional protein FolD from Herminiimonas arsenicoxydans.